The following is a 601-amino-acid chain: MSTISIHHVGILRNPLHSKSKRASINKPWSLSLPRSSSASRLVEPCRVSSKTDTKPAEITRRSGNYEPSLWDFDFIQSLDNHHPYVKEEQLKREEELIVQVKILLGTKMEAVKQLELIDDLKNLGLSYFFRDEIKTILTSIYNNSFENKNNQVGDLYFTSLGFRLLRQHGFNVSQDIFDCFKNEKGSDFDETLIGEDTKATLQLYEASFHLREGENTLELARQISTKYLQKKVNEGRISDENLSSWIRHSLDLPLHWRIQRLEARWFLDAYAVREDKNPLIFELAKLDFNIIQATQQEELKEVSRGWNDSCLAEKLPFVRDRVVESYFWGVGLFEGHEFGYQRKLTAANTLLISAIDDVYDVYGTLDELRLFTDVFRRWDTESIDQLPYYMQLCYLALYNYVSGVAYDILKDHRRNTIPYLQETWVELVEAYMKEAEWYKSGYTPSLEEYLTIAKISIASLTILLSVELSLPDSTIDRATFDRRHKMFYLSATVSRLADDLGTAPSELERGDVPKAIQCYMKDTNASEEEARGHVRFMIGETWKELNTAMAKPDDCPFTEQVVEATANLGRAAQFIYREGDGHGHFQIHQHMGNLFFHPYV.

Residues 1–47 constitute a chloroplast transit peptide; sequence MSTISIHHVGILRNPLHSKSKRASINKPWSLSLPRSSSASRLVEPCR. The Mn(2+) site is built by D357 and D361. Positions 357-361 match the DDXXD motif motif; sequence DDVYD. Homodimerization stretches follow at residues 363–369 and 435–471; these read YGTLDEL and EAEW…ELSL. Mn(2+)-binding residues include D499 and E507.

The protein belongs to the terpene synthase family. In terms of assembly, homodimer. It depends on Mn(2+) as a cofactor. Mg(2+) serves as cofactor.

The protein localises to the plastid. It is found in the chloroplast. The catalysed reaction is (2E)-geranyl diphosphate + H2O = (S)-alpha-terpineol + diphosphate. It catalyses the reaction (2E)-geranyl diphosphate + H2O = (R)-alpha-terpineol + diphosphate. It participates in secondary metabolite biosynthesis; terpenoid biosynthesis. Functionally, involved in the biosynthesis of phenolic monoterpenes natural products. Monoterpene synthase which catalyzes the conversion of geranyl diphosphate (GPP) to alpha-terpineol (isomer is not determined). This is Alpha-terpineol synthase, chloroplastic from Thymus caespititius (Cretan thyme).